Consider the following 71-residue polypeptide: High-potential iron-sulfur protein isozyme 2 (71 aa).

Positions 34, 37, 51, and 65 each coordinate [4Fe-4S] cluster.

The protein belongs to the high-potential iron-sulfur protein (HiPIP) family. Homodimer.

Its function is as follows. Specific class of high-redox-potential 4Fe-4S ferredoxins. Functions in anaerobic electron transport in most purple and in some other photosynthetic bacteria and in at least one genus (Paracoccus) of halophilic, denitrifying bacteria. The sequence is that of High-potential iron-sulfur protein isozyme 2 (hip2) from Ectothiorhodospira shaposhnikovii (Ectothiorhodospira vacuolata).